We begin with the raw amino-acid sequence, 721 residues long: Long-chain-fatty-acid--CoA ligase ACSBG1 (721 aa).

The segment at 1–64 (MPRGSEAGYC…SHGLELSAPE (64 aa)) is disordered. Over residues 26-52 (QQGASLGTSQDNSQTSSLIDGQTLSKE) the composition is skewed to polar residues. Phosphoserine occurs at positions 34, 50, 53, and 70. ATP is bound by residues 279–287 (TSGTTGNPK), 469–474 (AGYGLS), D547, and R562. Y655 carries the phosphotyrosine modification. K698 contacts ATP.

Belongs to the ATP-dependent AMP-binding enzyme family. Bubblegum subfamily. As to expression, mainly expressed in brain. Also expressed in adrenal gland and testis. In brain, it is present in cerebral cortical and cerebellar neurons and in steroidogenic cells of the adrenal gland, testis and ovary (at protein level).

It is found in the cytoplasm. Its subcellular location is the cytoplasmic vesicle. The protein localises to the microsome. The protein resides in the endoplasmic reticulum. It localises to the cell membrane. It catalyses the reaction a long-chain fatty acid + ATP + CoA = a long-chain fatty acyl-CoA + AMP + diphosphate. The enzyme catalyses (E)-hexadec-2-enoate + ATP + CoA = (2E)-hexadecenoyl-CoA + AMP + diphosphate. It carries out the reaction hexadecanoate + ATP + CoA = hexadecanoyl-CoA + AMP + diphosphate. Catalyzes the conversion of fatty acids such as long-chain and very long-chain fatty acids to their active form acyl-CoAs for both synthesis of cellular lipids, and degradation via beta-oxidation. Can activate diverse saturated, monosaturated and polyunsaturated fatty acids. The polypeptide is Long-chain-fatty-acid--CoA ligase ACSBG1 (Mus musculus (Mouse)).